The primary structure comprises 198 residues: Recombination protein RecR (198 aa).

The C4-type zinc finger occupies 56 to 71 (CKVCGNFSEEDECVIC). The Toprim domain occupies 79–174 (GVICVVEEPK…RVSKLASGLP (96 aa)).

The protein belongs to the RecR family.

Functionally, may play a role in DNA repair. It seems to be involved in an RecBC-independent recombinational process of DNA repair. It may act with RecF and RecO. The protein is Recombination protein RecR of Tropheryma whipplei (strain Twist) (Whipple's bacillus).